The chain runs to 161 residues: Probable chemoreceptor glutamine deamidase CheD (161 aa).

The protein belongs to the CheD family.

It carries out the reaction L-glutaminyl-[protein] + H2O = L-glutamyl-[protein] + NH4(+). In terms of biological role, probably deamidates glutamine residues to glutamate on methyl-accepting chemotaxis receptors (MCPs), playing an important role in chemotaxis. This Thermococcus kodakarensis (strain ATCC BAA-918 / JCM 12380 / KOD1) (Pyrococcus kodakaraensis (strain KOD1)) protein is Probable chemoreceptor glutamine deamidase CheD.